The primary structure comprises 738 residues: Melanotransferrin (738 aa).

A signal peptide spans 1–19; that stretch reads MRLLSVTFWLLLSLRTVVC. Transferrin-like domains are found at residues 23 to 357 and 366 to 706; these read VQWC…GLLC and LRWC…GMLS. Intrachain disulfides connect C26–C63 and C36–C54. Fe(3+)-binding residues include D78 and Y107. Residue N118 is glycosylated (N-linked (GlcNAc...) asparagine). 4 cysteine pairs are disulfide-bonded: C130/C216, C172/C189, C186/C199, and C257/C271. T132 lines the hydrogencarbonate pocket. N-linked (GlcNAc...) asparagine glycosylation is present at N135. Residues R136, V138, and G139 each contribute to the hydrogencarbonate site. Y210 is a binding site for Fe(3+). Residues H279 and Y451 each contribute to the Fe(3+) site. S462 is modified (phosphoserine). N-linked (GlcNAc...) asparagine glycosylation is present at N515. Fe(3+) is bound by residues Y556 and H625. C709 carries the GPI-anchor amidated cysteine lipid modification. Residues 710-738 constitute a propeptide, removed in mature form; sequence SGAGAAVQRVPLLALLLLTLAAGLLPRVL.

This sequence belongs to the transferrin family.

The protein resides in the cell membrane. Functionally, involved in iron cellular uptake. Seems to be internalized and then recycled back to the cell membrane. Binds a single atom of iron per subunit. Could also bind zinc. This Mus musculus (Mouse) protein is Melanotransferrin (Meltf).